The chain runs to 66 residues: Large ribosomal subunit protein bL33 (66 aa).

This sequence belongs to the bacterial ribosomal protein bL33 family.

The sequence is that of Large ribosomal subunit protein bL33 from Synechococcus sp. (strain CC9311).